A 368-amino-acid polypeptide reads, in one-letter code: Ethanol acetyltransferase 1 (368 aa).

Residues 1–21 constitute a mitochondrion transit peptide; sequence MFLSLRPSLSVSRLAVVRRAY. One can recognise an AB hydrolase-1 domain in the interval 67-171; that stretch reads PIIFFHGLLG…IIDNAPEPQP (105 aa). Residues S140, D164, and H315 each act as charge relay system in the active site. Residues 344-368 form a disordered region; it reads RNKDPNNYMQTQNSISNSDTMGQSL. Over residues 348 to 368 the composition is skewed to polar residues; that stretch reads PNNYMQTQNSISNSDTMGQSL.

It belongs to the AB hydrolase superfamily.

It localises to the mitochondrion. The enzyme catalyses ethanol + acetyl-CoA = ethyl acetate + CoA. It carries out the reaction acetyl-CoA + H2O = acetate + CoA + H(+). It catalyses the reaction ethyl acetate + H2O = ethanol + acetate + H(+). In terms of biological role, alcohol acetyltransferase that catalyzes the synthesis of ethyl acetate from ethanol and acetyl-CoA. Can also function as a thioesterase by hydrolyzing acetyl-CoA in the absence of ethanol, as well as esterase hydrolyzing ethyl acetate. This is Ethanol acetyltransferase 1 (EAT1) from Kluyveromyces lactis (strain ATCC 8585 / CBS 2359 / DSM 70799 / NBRC 1267 / NRRL Y-1140 / WM37) (Yeast).